The following is an 80-amino-acid chain: Serine palmitoyltransferase small subunit A-A (80 aa).

Residues 1 to 21 are Cytoplasmic-facing; sequence MKVLCEDVNGPRSSLGRAWSH. A helical transmembrane segment spans residues 22–38; the sequence is MSWLYYQYLLVTALYML. Residues 39-43 lie on the Lumenal side of the membrane; it reads EPWER. The helical transmembrane segment at 44–66 threads the bilayer; that stretch reads TVFNSMLVSIVGMALYTGYIFMP. Residues 67–80 lie on the Cytoplasmic side of the membrane; the sequence is QHILAILHYFEIVQ.

The protein belongs to the SPTSS family. SPTSSA subfamily. Component of the serine palmitoyltransferase (SPT) complex, which is composed of SPTLC1, SPTLC2 or SPTLC3 and SPTSSA or SPTSSB. The heterodimer consisting of SPTLC1 and SPTLC2/SPTLC3 forms the catalytic core of the enzyme, while SPTSSA or SPTSSB subunits determine substrate specificity. SPT also interacts with ORMDL proteins, especially ORMDL3, which negatively regulate SPT activity in the presence of ceramides.

It is found in the endoplasmic reticulum membrane. It participates in lipid metabolism; sphingolipid metabolism. Component of the serine palmitoyltransferase multisubunit enzyme (SPT) that catalyzes the initial and rate-limiting step in sphingolipid biosynthesis by condensing L-serine and activated acyl-CoA (most commonly palmitoyl-CoA) to form long-chain bases. The SPT complex is composed of SPTLC1, SPTLC2 or SPTLC3 and SPTSSA or SPTSSB. Within this complex, the heterodimer consisting of SPTLC1 and SPTLC2/SPTLC3 forms the catalytic core. Within the SPT complex, SPTSSA stimulates the catalytic activity and plays a role in substrate specificity, which depends upon the overall complex composition. The SPTLC1-SPTLC2-SPTSSA complex shows a strong preference for C16-CoA substrate, while the SPTLC1-SPTLC3-SPTSSA isozyme uses both C14-CoA and C16-CoA as substrates, with a slight preference for C14-CoA. Independently of its action as a SPT component, may be involved in MBOAT7 localization to mitochondria-associated membranes, a membrane bridge between the endoplasmic reticulum and mitochondria, may hence affect MBOAT7-catalyzed incorporation of arachidonic acid into phosphatidylinositol. This is Serine palmitoyltransferase small subunit A-A (sptssa-a) from Xenopus laevis (African clawed frog).